The sequence spans 24 residues: Coenzyme PQQ synthesis protein A (24 aa).

The segment at residues 16–20 is a cross-link (pyrroloquinoline quinone (Glu-Tyr)); it reads EITMY.

Belongs to the PqqA family.

It functions in the pathway cofactor biosynthesis; pyrroloquinoline quinone biosynthesis. Functionally, required for coenzyme pyrroloquinoline quinone (PQQ) biosynthesis. PQQ is probably formed by cross-linking a specific glutamate to a specific tyrosine residue and excising these residues from the peptide. This Variovorax paradoxus (strain S110) protein is Coenzyme PQQ synthesis protein A.